We begin with the raw amino-acid sequence, 124 residues long: MPTIQQLIRSERSKAKKKTKSPALKQCPQRRGVCTRVYTTTPKKPNSALRKVARVRLTSGFEVTAYIPGIGHNLQEHSVVLIRGGRVKDLPGVRYHIIRGTLDAQGVKDRKQGRSKYGTKKPKE.

Residues 1–28 (MPTIQQLIRSERSKAKKKTKSPALKQCP) are disordered. Aspartate 89 is subject to 3-methylthioaspartic acid. Residues 101 to 124 (TLDAQGVKDRKQGRSKYGTKKPKE) form a disordered region. Over residues 113–124 (GRSKYGTKKPKE) the composition is skewed to basic residues.

This sequence belongs to the universal ribosomal protein uS12 family. As to quaternary structure, part of the 30S ribosomal subunit. Contacts proteins S8 and S17. May interact with IF1 in the 30S initiation complex.

With S4 and S5 plays an important role in translational accuracy. Its function is as follows. Interacts with and stabilizes bases of the 16S rRNA that are involved in tRNA selection in the A site and with the mRNA backbone. Located at the interface of the 30S and 50S subunits, it traverses the body of the 30S subunit contacting proteins on the other side and probably holding the rRNA structure together. The combined cluster of proteins S8, S12 and S17 appears to hold together the shoulder and platform of the 30S subunit. The chain is Small ribosomal subunit protein uS12 from Crocosphaera subtropica (strain ATCC 51142 / BH68) (Cyanothece sp. (strain ATCC 51142)).